Here is a 335-residue protein sequence, read N- to C-terminus: tRNA N6-adenosine threonylcarbamoyltransferase (335 aa).

Positions 111 and 115 each coordinate Fe cation. Substrate-binding positions include 133-137 (LISGG), aspartate 166, glycine 179, and asparagine 276. Residue aspartate 301 coordinates Fe cation.

The protein belongs to the KAE1 / TsaD family. Fe(2+) is required as a cofactor.

The protein resides in the cytoplasm. It catalyses the reaction L-threonylcarbamoyladenylate + adenosine(37) in tRNA = N(6)-L-threonylcarbamoyladenosine(37) in tRNA + AMP + H(+). Its function is as follows. Required for the formation of a threonylcarbamoyl group on adenosine at position 37 (t(6)A37) in tRNAs that read codons beginning with adenine. Is involved in the transfer of the threonylcarbamoyl moiety of threonylcarbamoyl-AMP (TC-AMP) to the N6 group of A37, together with TsaE and TsaB. TsaD likely plays a direct catalytic role in this reaction. The sequence is that of tRNA N6-adenosine threonylcarbamoyltransferase from Wolbachia sp. subsp. Brugia malayi (strain TRS).